The following is a 453-amino-acid chain: Carbamoyl phosphate synthase arginine-specific small chain (453 aa).

Residues 1-28 constitute a mitochondrion transit peptide; sequence MFARVFKAMPARASALTSVNASIPARFM. A Glutamine amidotransferase type-1 domain is found at 219 to 406; it reads HVAVIDCGVK…IDSVKKYKAS (188 aa). The active-site Nucleophile is Cys-295. Catalysis depends on residues His-379 and Glu-381.

Belongs to the CarA family. In terms of assembly, heterodimer composed of 2 chains; the small (or glutamine) chain promotes the hydrolysis of glutamine to ammonia, which is used by the large (or ammonia) chain to synthesize carbamoyl phosphate.

The protein resides in the mitochondrion matrix. It catalyses the reaction hydrogencarbonate + L-glutamine + 2 ATP + H2O = carbamoyl phosphate + L-glutamate + 2 ADP + phosphate + 2 H(+). The catalysed reaction is L-glutamine + H2O = L-glutamate + NH4(+). It functions in the pathway amino-acid biosynthesis; L-arginine biosynthesis; carbamoyl phosphate from bicarbonate: step 1/1. In terms of biological role, small subunit of the arginine-specific carbamoyl phosphate synthase (CPSase). CPSase catalyzes the formation of carbamoyl phosphate from the ammonia moiety of glutamine, carbonate, and phosphate donated by ATP, the first step of the arginine biosynthetic pathway. The small subunit (glutamine amidotransferase) binds and cleaves glutamine to supply the large subunit with the substrate ammonia. The chain is Carbamoyl phosphate synthase arginine-specific small chain (cpa1) from Aspergillus fumigatus (strain ATCC MYA-4609 / CBS 101355 / FGSC A1100 / Af293) (Neosartorya fumigata).